The chain runs to 891 residues: Alanine--tRNA ligase (891 aa).

Zn(2+) contacts are provided by His564, His568, Cys681, and His685.

It belongs to the class-II aminoacyl-tRNA synthetase family. Zn(2+) is required as a cofactor.

The protein localises to the cytoplasm. The catalysed reaction is tRNA(Ala) + L-alanine + ATP = L-alanyl-tRNA(Ala) + AMP + diphosphate. Catalyzes the attachment of alanine to tRNA(Ala) in a two-step reaction: alanine is first activated by ATP to form Ala-AMP and then transferred to the acceptor end of tRNA(Ala). Also edits incorrectly charged Ser-tRNA(Ala) and Gly-tRNA(Ala) via its editing domain. This chain is Alanine--tRNA ligase, found in Methylorubrum extorquens (strain PA1) (Methylobacterium extorquens).